The primary structure comprises 152 residues: UPF0178 protein YaiI (152 aa).

Belongs to the UPF0178 family.

This is UPF0178 protein YaiI from Escherichia coli O6:K15:H31 (strain 536 / UPEC).